We begin with the raw amino-acid sequence, 540 residues long: Signal peptide peptidase-like 2 (540 aa).

The N-terminal stretch at 1–27 (MDSLRFLRILLLSSSILLLSLRSTVTA) is a signal peptide. Residues 28–196 (GDIVHQDNLA…PRRPAVDVAE (169 aa)) are Lumenal-facing. Asn83 carries an N-linked (GlcNAc...) asparagine glycan. One can recognise a PA domain in the interval 95–173 (SCTPLKNKLS…QDAGASLQKM (79 aa)). Asn176 carries an N-linked (GlcNAc...) asparagine glycan. A helical membrane pass occupies residues 197 to 217 (VFLWLMAIGTILCASYWSAWS). Residues 218 to 248 (AREAAIEHDKLLKDAIDEIPNTNDGGSGVVE) lie on the Cytoplasmic side of the membrane. A helical membrane pass occupies residues 249 to 269 (INSISAIFFVVLASGFLVILY). Residues 270–278 (KLMSYWFVE) lie on the Lumenal side of the membrane. Residues 279–299 (LLVVVFCIGGVEGLQTCLVAL) traverse the membrane as a helical segment. At 300–319 (LSRWFQRAADTYVKVPFLGP) the chain is on the cytoplasmic side. The helical transmembrane segment at 320–340 (ISYLTLAVSPFCIVFAVLWAV) threads the bilayer. Topologically, residues 341–345 (YRVHS) are lumenal. The helical transmembrane segment at 346 to 366 (FAWIGQDVLGIALIITVLQIV) threads the bilayer. Residues 367–370 (HVPN) lie on the Cytoplasmic side of the membrane. A helical transmembrane segment spans residues 371–391 (LKVGTVLLSCAFLYDIFWVFV). The active site involves Asp385. Topologically, residues 392-429 (SKKLFHESVMIVVARGDKSGEDGIPMLLKIPRMFDPWG) are lumenal. The chain crosses the membrane as a helical span at residues 430 to 450 (GYSIIGFGDILLPGLLIAFAL). Asp438 is a catalytic residue. Over 451 to 462 (RYDWLANKTLRT) the chain is Cytoplasmic. Residues 463–483 (GYFIWAMVAYGLGLLITYVAL) traverse the membrane as a helical segment. The Lumenal segment spans residues 484–488 (NLMDG). A helical transmembrane segment spans residues 489 to 509 (HGQPALLYIVPFTLGTMLTLA). Residues 492–494 (PAL) carry the PAL motif. The Cytoplasmic portion of the chain corresponds to 510–540 (RKRDDLWILWTKGEPERACPHHVRLEQCSEK).

Belongs to the peptidase A22B family. In terms of processing, glycosylated. As to expression, ubiquitous.

Its subcellular location is the endosome membrane. Its function is as follows. Intramembrane-cleaving aspartic protease (I-CLiP) that cleaves type II membrane signal peptides in the hydrophobic plane of the membrane. In Arabidopsis thaliana (Mouse-ear cress), this protein is Signal peptide peptidase-like 2 (SPPL2).